We begin with the raw amino-acid sequence, 404 residues long: Putative Peroxidase 48 (404 aa).

A signal peptide spans 1 to 18 (MRFLGDYKFALLTCSVIA). Cystine bridges form between C77/C156, C110/C115, C162/C397, and C241/C273. The active-site Proton acceptor is H108. The Ca(2+) site is built by D109, I112, G114, D116, and S118. An N-linked (GlcNAc...) asparagine glycan is attached at N136. A substrate-binding site is contributed by P204. Residue H234 coordinates heme b. S235 is a binding site for Ca(2+). N-linked (GlcNAc...) asparagine glycosylation occurs at N250. The disordered stretch occupies residues 276–307 (SVSTSSPSAPPDIGLPPSLPASDSENSYGMSS). Positions 283–294 (SAPPDIGLPPSL) are enriched in pro residues. D287 provides a ligand contact to Ca(2+). The span at 296–307 (ASDSENSYGMSS) shows a compositional bias: polar residues.

This sequence belongs to the peroxidase family. Classical plant (class III) peroxidase subfamily. The cofactor is heme b. Requires Ca(2+) as cofactor.

It localises to the secreted. It catalyses the reaction 2 a phenolic donor + H2O2 = 2 a phenolic radical donor + 2 H2O. Its function is as follows. Removal of H(2)O(2), oxidation of toxic reductants, biosynthesis and degradation of lignin, suberization, auxin catabolism, response to environmental stresses such as wounding, pathogen attack and oxidative stress. These functions might be dependent on each isozyme/isoform in each plant tissue. The chain is Putative Peroxidase 48 (PER48) from Arabidopsis thaliana (Mouse-ear cress).